The primary structure comprises 380 residues: Putative 12-oxophytodienoate reductase 4 (380 aa).

Residues 36–38, Ala-69, and Gln-111 contribute to the FMN site; that span reads PLT. 183–186 is a substrate binding site; sequence HGAH. Tyr-188 acts as the Proton donor in catalysis. Residue Arg-235 participates in FMN binding. Arg-276 provides a ligand contact to substrate. FMN-binding positions include Gly-306 and 327–328; that span reads GR.

Belongs to the NADH:flavin oxidoreductase/NADH oxidase family. The cofactor is FMN.

Putative oxophytodienoate reductase that may be involved in the biosynthesis or metabolism of oxylipin signaling molecules. In Oryza sativa subsp. japonica (Rice), this protein is Putative 12-oxophytodienoate reductase 4 (OPR4).